Consider the following 284-residue polypeptide: Pantothenate synthetase (284 aa).

30–37 (MGNLHDGH) contacts ATP. The Proton donor role is filled by H37. Q61 contributes to the (R)-pantoate binding site. Q61 is a beta-alanine binding site. 149 to 152 (GEKD) contacts ATP. Q155 contributes to the (R)-pantoate binding site. ATP-binding positions include V178 and 186–189 (LSSR).

The protein belongs to the pantothenate synthetase family. In terms of assembly, homodimer.

It is found in the cytoplasm. The enzyme catalyses (R)-pantoate + beta-alanine + ATP = (R)-pantothenate + AMP + diphosphate + H(+). Its pathway is cofactor biosynthesis; (R)-pantothenate biosynthesis; (R)-pantothenate from (R)-pantoate and beta-alanine: step 1/1. In terms of biological role, catalyzes the condensation of pantoate with beta-alanine in an ATP-dependent reaction via a pantoyl-adenylate intermediate. This chain is Pantothenate synthetase, found in Photorhabdus laumondii subsp. laumondii (strain DSM 15139 / CIP 105565 / TT01) (Photorhabdus luminescens subsp. laumondii).